We begin with the raw amino-acid sequence, 250 residues long: uncharacterized protein (250 aa).

Belongs to the glycosyltransferase 2 family.

This is an uncharacterized protein from Haemophilus influenzae (strain ATCC 51907 / DSM 11121 / KW20 / Rd).